We begin with the raw amino-acid sequence, 333 residues long: MSFNLRNRSFLTLSDFSTREMEYMLNLAEDLKKAKYAGYEGNRLAGKNIALIFEKDSTRTRCAFEVGAKDEGAHVTYLGPSGSHIGYKESVKDTARVLGGMFDGIEYRGFSQRSAETLAEYSGVPVWNGLTDEDHPTQVLADFLTAKEVLKKEYKDIKFAFVGDGQDNVSNALMLGAAVMGMEYHVVTPKELEPTKDVLDKANAIAAKTGGKIVVENDVKAGVKNMDVIYTDVWVSMGEPDEMWQKRIKLLKPYQVTKEVMEATENPNAIFEHCLPAFHNTDTSIGKKIEEKYGLSEMEVTDEVFESSQSVVFQEAENRMHTIKAVMVATLGD.

Carbamoyl phosphate-binding positions include 57–60 (STRT), arginine 108, and 135–138 (HPTQ). L-ornithine-binding positions include asparagine 168, aspartate 232, and 236–237 (SM). Residues 274-275 (CL) and arginine 319 contribute to the carbamoyl phosphate site.

Belongs to the aspartate/ornithine carbamoyltransferase superfamily. OTCase family.

It localises to the cytoplasm. The catalysed reaction is carbamoyl phosphate + L-ornithine = L-citrulline + phosphate + H(+). Its pathway is amino-acid degradation; L-arginine degradation via ADI pathway; carbamoyl phosphate from L-arginine: step 2/2. Reversibly catalyzes the transfer of the carbamoyl group from carbamoyl phosphate (CP) to the N(epsilon) atom of ornithine (ORN) to produce L-citrulline. The chain is Ornithine carbamoyltransferase from Pediococcus pentosaceus (strain ATCC 25745 / CCUG 21536 / LMG 10740 / 183-1w).